The following is a 425-amino-acid chain: AP-3 complex subunit mu (425 aa).

One can recognise an MHD domain in the interval Thr175–Arg423.

The protein belongs to the adaptor complexes medium subunit family.

Its subcellular location is the cytoplasm. It is found in the cytoskeleton. The protein resides in the microtubule organizing center. The protein localises to the spindle pole body. It localises to the membrane. Its subcellular location is the golgi apparatus. It is found in the cytoplasmic vesicle membrane. Functionally, part of the AP-3 complex, an adaptor-related complex which is not clathrin-associated. The complex is associated with the Golgi region as well as more peripheral structures. It facilitates the budding of vesicles from the Golgi membrane and may be directly involved in trafficking to the vacuole. The chain is AP-3 complex subunit mu (apm3) from Schizosaccharomyces pombe (strain 972 / ATCC 24843) (Fission yeast).